Consider the following 337-residue polypeptide: MKLVDRFRGAATGTSRRLMVGAVGAALLSGLVGFVGGSATASAFSRPGLPVEYLQVPSVAMGRNIKVQFQSGGANSPALYLLDGMRAQDDFSGWDINTPAFEWYYQSGISVAMPVGGQSSFYSDWYNPACGKAGCTTYKWETFLTSELPQYLSANKGVKPTGSGVVGLSMAGSSALILAAYHPDQFVYSGSLSALLDPSQGIGPSLIGLAMGDAGGYKASDMWGPKDDPAWARNDPMLQVGKLVANNTRIWVYCGNGKPSDLGGDNLPAKFLEGFVRTSNMKFQAAYNAAGGHNAVWNFDDNGTHSWEYWGAQLNAMRPDLQHTLGATPNTGDTQGA.

An N-terminal signal peptide occupies residues 1–42; sequence MKLVDRFRGAATGTSRRLMVGAVGAALLSGLVGFVGGSATAS. Residue 85 to 86 participates in substrate binding; that stretch reads MR. The tract at residues 101–111 is fibronectin-binding; the sequence is FEWYYQSGISV. C130 and C135 are disulfide-bonded. 2 residues coordinate substrate: S169 and D197. Residue S169 is the Nucleophile of the active site. E273 is an active-site residue. Substrate contacts are provided by residues 275–278, K282, and 305–307; these read FVRT and HSW. H305 is an active-site residue.

The protein belongs to the mycobacterial A85 antigen family. Homodimer.

It is found in the secreted. It localises to the cell wall. The protein resides in the cytoplasm. It catalyses the reaction an acyl-CoA + a 1,2-diacyl-sn-glycerol = a triacyl-sn-glycerol + CoA. The enzyme catalyses 2 alpha,alpha'-trehalose 6-mycolate = alpha,alpha'-trehalose 6,6'-bismycolate + alpha,alpha-trehalose. In terms of biological role, the antigen 85 proteins (FbpA, FbpB, FbpC) are responsible for the high affinity of mycobacteria for fibronectin, a large adhesive glycoprotein, which facilitates the attachment of M.tuberculosis to murine alveolar macrophages (AMs). They also help to maintain the integrity of the cell wall by catalyzing the transfer of mycolic acids to cell wall arabinogalactan, and through the synthesis of alpha,alpha-trehalose dimycolate (TDM, cord factor). They catalyze the transfer of a mycoloyl residue from one molecule of alpha,alpha-trehalose monomycolate (TMM) to another TMM, leading to the formation of TDM. FbpA mediates triacylglycerol (TAG) formation with long-chain acyl-CoA as the acyl donor and 1,2-dipalmitoyl-sn-glycerol (1,2-dipalmitin) as the acyl acceptor. It has a preference for C26:0-CoA over C18:1-CoA. This is Diacylglycerol acyltransferase/mycolyltransferase Ag85A (fbpA) from Mycobacterium ulcerans.